A 206-amino-acid chain; its full sequence is Small ribosomal subunit protein uS4 (206 aa).

Residues 96 to 156 (RRLDNVVYRM…EKSKNQLRIK (61 aa)) form the S4 RNA-binding domain.

Belongs to the universal ribosomal protein uS4 family. In terms of assembly, part of the 30S ribosomal subunit. Contacts protein S5. The interaction surface between S4 and S5 is involved in control of translational fidelity.

In terms of biological role, one of the primary rRNA binding proteins, it binds directly to 16S rRNA where it nucleates assembly of the body of the 30S subunit. Functionally, with S5 and S12 plays an important role in translational accuracy. This Hahella chejuensis (strain KCTC 2396) protein is Small ribosomal subunit protein uS4.